The primary structure comprises 144 residues: Granulocyte-macrophage colony-stimulating factor (144 aa).

An N-terminal signal peptide occupies residues methionine 1–serine 17. Serine 24 is a glycosylation site (O-linked (GalNAc...) serine). Threonine 27 carries an O-linked (GalNAc...) threonine glycan. N-linked (GlcNAc...) asparagine glycosylation is found at asparagine 44 and asparagine 54. 2 cysteine pairs are disulfide-bonded: cysteine 71/cysteine 113 and cysteine 105/cysteine 138.

Belongs to the GM-CSF family. As to quaternary structure, monomer. The signaling GM-CSF receptor complex is a dodecamer of two head-to-head hexamers of two alpha, two beta, and two ligand subunits.

It is found in the secreted. Functionally, cytokine that stimulates the growth and differentiation of hematopoietic precursor cells from various lineages, including granulocytes, macrophages, eosinophils and erythrocytes. The chain is Granulocyte-macrophage colony-stimulating factor (CSF2) from Chlorocebus aethiops (Green monkey).